We begin with the raw amino-acid sequence, 258 residues long: Tryptophan synthase alpha chain (258 aa).

Residues Glu47 and Asp58 each act as proton acceptor in the active site.

This sequence belongs to the TrpA family. Tetramer of two alpha and two beta chains.

It carries out the reaction (1S,2R)-1-C-(indol-3-yl)glycerol 3-phosphate + L-serine = D-glyceraldehyde 3-phosphate + L-tryptophan + H2O. It participates in amino-acid biosynthesis; L-tryptophan biosynthesis; L-tryptophan from chorismate: step 5/5. Functionally, the alpha subunit is responsible for the aldol cleavage of indoleglycerol phosphate to indole and glyceraldehyde 3-phosphate. The chain is Tryptophan synthase alpha chain from Bacillus anthracis (strain CDC 684 / NRRL 3495).